A 228-amino-acid chain; its full sequence is Small ribosomal subunit protein uS3 (228 aa).

In terms of domain architecture, KH type-2 spans 39-107 (VREFIRERLK…PVHINIEEIR (69 aa)).

It belongs to the universal ribosomal protein uS3 family. Part of the 30S ribosomal subunit. Forms a tight complex with proteins S10 and S14.

Functionally, binds the lower part of the 30S subunit head. Binds mRNA in the 70S ribosome, positioning it for translation. The chain is Small ribosomal subunit protein uS3 from Halorhodospira halophila (strain DSM 244 / SL1) (Ectothiorhodospira halophila (strain DSM 244 / SL1)).